The chain runs to 279 residues: Ribosomal RNA small subunit methyltransferase J (279 aa).

S-adenosyl-L-methionine-binding positions include 138-139 (ER) and aspartate 194.

This sequence belongs to the methyltransferase superfamily. RsmJ family.

The protein resides in the cytoplasm. The catalysed reaction is guanosine(1516) in 16S rRNA + S-adenosyl-L-methionine = N(2)-methylguanosine(1516) in 16S rRNA + S-adenosyl-L-homocysteine + H(+). In terms of biological role, specifically methylates the guanosine in position 1516 of 16S rRNA. In Acinetobacter baumannii (strain ATCC 17978 / DSM 105126 / CIP 53.77 / LMG 1025 / NCDC KC755 / 5377), this protein is Ribosomal RNA small subunit methyltransferase J.